A 175-amino-acid chain; its full sequence is MTRIFLIGYMGAGKTTLGKAFAREMSLNFIDLDWFIEERFHKTVQQLFLERGEDGFRELERKMLHEVAEFEDVVVSTGGGTPCFFDNMEYMNDCGDTVFLDVEPAVLFRRLRVAKQQRPLLANKSDEELMDFICEALQKRHPFYSKAKHLFKADELEDKRQIQASVDSLRKKLNK.

11 to 16 (GAGKTT) serves as a coordination point for ATP. A Mg(2+)-binding site is contributed by Thr-15. The substrate site is built by Asp-33, Arg-57, and Gly-79. ATP is bound at residue Arg-118. Arg-140 lines the substrate pocket.

This sequence belongs to the shikimate kinase family. In terms of assembly, monomer. It depends on Mg(2+) as a cofactor.

The protein localises to the cytoplasm. The catalysed reaction is shikimate + ATP = 3-phosphoshikimate + ADP + H(+). Its pathway is metabolic intermediate biosynthesis; chorismate biosynthesis; chorismate from D-erythrose 4-phosphate and phosphoenolpyruvate: step 5/7. In terms of biological role, catalyzes the specific phosphorylation of the 3-hydroxyl group of shikimic acid using ATP as a cosubstrate. This chain is Shikimate kinase, found in Phocaeicola vulgatus (strain ATCC 8482 / DSM 1447 / JCM 5826 / CCUG 4940 / NBRC 14291 / NCTC 11154) (Bacteroides vulgatus).